The chain runs to 242 residues: Agamous-like MADS-box protein MADS4 (242 aa).

The region spanning 1-61 (MGRGRVELKR…GKLYEFCSSS (61 aa)) is the MADS-box domain. The 97-residue stretch at 89-185 (ELSSQQEYLK…GTQVNQLQWN (97 aa)) folds into the K-box domain.

As to expression, expressed in flowers and seeds.

Its subcellular location is the nucleus. Probable transcription factor involved in flower development. This chain is Agamous-like MADS-box protein MADS4, found in Vitis vinifera (Grape).